Here is a 547-residue protein sequence, read N- to C-terminus: Chaperonin GroEL 2 (547 aa).

ATP contacts are provided by residues 30–33, Lys51, 87–91, Gly415, 479–481, and Asp495; these read TLGP, DGTTT, and NAA. The interval 525-547 is disordered; it reads PKEESAAPAGGGMGGMGGMGGMM. Positions 533–547 are enriched in gly residues; the sequence is AGGGMGGMGGMGGMM.

Belongs to the chaperonin (HSP60) family. In terms of assembly, forms a cylinder of 14 subunits composed of two heptameric rings stacked back-to-back. Interacts with the co-chaperonin GroES.

The protein resides in the cytoplasm. The catalysed reaction is ATP + H2O + a folded polypeptide = ADP + phosphate + an unfolded polypeptide.. Functionally, together with its co-chaperonin GroES, plays an essential role in assisting protein folding. The GroEL-GroES system forms a nano-cage that allows encapsulation of the non-native substrate proteins and provides a physical environment optimized to promote and accelerate protein folding. This Anaeromyxobacter dehalogenans (strain 2CP-C) protein is Chaperonin GroEL 2.